Here is a 417-residue protein sequence, read N- to C-terminus: Methyltransferase/ribosomally synthesized cyclic peptide omphalotin A precursor ophMA (417 aa).

The methyltransferase domain stretch occupies residues 1-251; sequence METSTQTKAG…GVSTFYIPPK (251 aa). Residues arginine 72, tyrosine 76, and tyrosine 98 contribute to the active site. S-adenosyl-L-methionine is bound by residues tyrosine 98, histidine 100, valine 103, alanine 130, glutamine 172, alanine 213, serine 244, and threonine 245. Positions 252-378 are clasp domain; the sequence is ARKASNLDII…WAIRCAMKNM (127 aa). The tract at residues 379–399 is precursor leader; it reads PSSLLDAARESGEEASQNGFP. An N-methylvaline mark is found at valine 401, valine 403, and valine 404. N-methylglycine is present on glycine 405. The residue at position 406 (valine 406) is an N-methylvaline. Isoleucine 407 carries the N-methylisoleucine modification. Residue glycine 408 is modified to N-methylglycine. Isoleucine 410 carries the N-methylisoleucine modification. Glycine 411 is subject to N-methylglycine. Valine 413 carries the N-methylvaline modification.

In the N-terminal section; belongs to the precorrin methyltransferase family. In terms of assembly, homodimer. In terms of processing, ophMA automethylates at Val-401, Val-403, Val-404, Gly-405, Val-406, Ile-407, Gly-408, Ile-410, Gly-411 and Val-413 before being processed by the prolyloligopeptidase ophP which likely forms a peptidyl ester upon removal of the follower propeptide, which then undergoes macrocyclization with the N-terminus of the modified core peptide. Peptide backbone alpha-N-methylations change the physicochemical properties of amide bonds to provide structural constraints and other favorable characteristics including biological membrane permeability to peptides.

Its pathway is mycotoxin biosynthesis. Its function is as follows. Fusion protein of the methyltransferase ophM and the omphalotin core peptide; part of the gene cluster that mediates the biosynthesis of omphalotin A, a highly methylated cyclic dodecapeptide with nematodicidal activity. Omphalotin A derives from the C-terminus of the ophMA protein, and it is the ophMA protein that methylates its own C-terminus using S-adenosyl methionine (SAM). The C-terminus is subsequently cleaved off and macrocyclized by the prolyloligopeptidase ophP to give the final product. The polypeptide is Methyltransferase/ribosomally synthesized cyclic peptide omphalotin A precursor ophMA (Omphalotus olearius (Jack o'lantern)).